Consider the following 106-residue polypeptide: ATP-dependent Clp protease adapter protein ClpS (106 aa).

It belongs to the ClpS family. As to quaternary structure, binds to the N-terminal domain of the chaperone ClpA.

Functionally, involved in the modulation of the specificity of the ClpAP-mediated ATP-dependent protein degradation. This chain is ATP-dependent Clp protease adapter protein ClpS, found in Vibrio vulnificus (strain CMCP6).